Reading from the N-terminus, the 447-residue chain is Glutamyl-tRNA reductase (447 aa).

Substrate contacts are provided by residues 45 to 48, Ser-111, 116 to 118, and Gln-122; these read TCNR and ETE. The Nucleophile role is filled by Cys-46. 191-196 contacts NADP(+); sequence GTGKYA.

The protein belongs to the glutamyl-tRNA reductase family. In terms of assembly, homodimer.

The enzyme catalyses (S)-4-amino-5-oxopentanoate + tRNA(Glu) + NADP(+) = L-glutamyl-tRNA(Glu) + NADPH + H(+). Its pathway is porphyrin-containing compound metabolism; protoporphyrin-IX biosynthesis; 5-aminolevulinate from L-glutamyl-tRNA(Glu): step 1/2. Its function is as follows. Catalyzes the NADPH-dependent reduction of glutamyl-tRNA(Glu) to glutamate 1-semialdehyde (GSA). The protein is Glutamyl-tRNA reductase of Tropheryma whipplei (strain Twist) (Whipple's bacillus).